A 68-amino-acid chain; its full sequence is Serine palmitoyltransferase small subunit A (68 aa).

The Cytoplasmic segment spans residues 1–9 (MAFGDAWKQ). Residues 10–26 (LSWFYYQYLLVTALYML) form a helical membrane-spanning segment. At 27–31 (EPWER) the chain is on the lumenal side. Residues 32 to 54 (TIFNSLLISVAAMAVYTGYVFMP) traverse the membrane as a helical segment. At 55–68 (QHIMAILHYFEVVQ) the chain is on the cytoplasmic side.

It belongs to the SPTSS family. SPTSSA subfamily. Component of the serine palmitoyltransferase (SPT) complex, which is composed of SPTLC1, SPTLC2 or SPTLC3 and SPTSSA or SPTSSB. The heterodimer consisting of SPTLC1 and SPTLC2/SPTLC3 forms the catalytic core of the enzyme, while SPTSSA or SPTSSB subunits determine substrate specificity. SPT also interacts with ORMDL proteins, especially ORMDL3, which negatively regulate SPT activity in the presence of ceramides.

The protein resides in the endoplasmic reticulum membrane. Its pathway is lipid metabolism; sphingolipid metabolism. Functionally, component of the serine palmitoyltransferase multisubunit enzyme (SPT) that catalyzes the initial and rate-limiting step in sphingolipid biosynthesis by condensing L-serine and activated acyl-CoA (most commonly palmitoyl-CoA) to form long-chain bases. The SPT complex is composed of SPTLC1, SPTLC2 or SPTLC3 and SPTSSA or SPTSSB. Within this complex, the heterodimer consisting of SPTLC1 and SPTLC2/SPTLC3 forms the catalytic core. Within the SPT complex, SPTSSA stimulates the catalytic activity and plays a role in substrate specificity, which depends upon the overall complex composition. The SPTLC1-SPTLC2-SPTSSA complex shows a strong preference for C16-CoA substrate, while the SPTLC1-SPTLC3-SPTSSA isozyme uses both C14-CoA and C16-CoA as substrates, with a slight preference for C14-CoA. Independently of its action as a SPT component, may be involved in MBOAT7 localization to mitochondria-associated membranes, a membrane bridge between the endoplasmic reticulum and mitochondria, may hence affect MBOAT7-catalyzed incorporation of arachidonic acid into phosphatidylinositol. This Danio rerio (Zebrafish) protein is Serine palmitoyltransferase small subunit A (sptssa).